The following is a 189-amino-acid chain: T cell receptor gamma constant 2 (189 aa).

Residues 10-104 (PKPTIFLPSI…NKNGIDQEII (95 aa)) enclose the Ig-like domain. Cys32 and Cys88 are oxidised to a cystine. Residues Asn66, Asn120, Asn136, Asn142, and Asn151 are each glycosylated (N-linked (GlcNAc...) asparagine). The helical transmembrane segment at 155–177 (YYTYLLLLLKSVVYFAIITCCLL) threads the bilayer.

As to quaternary structure, gamma-delta TR is a heterodimer composed of a gamma and delta chain; disulfide-linked. The gamma-delta TR is associated with the transmembrane signaling CD3 coreceptor proteins following the stoichiometry: a single gamma-delta TR heterodimer associates with one CD3D-CD3E heterodimer, one CD3G-CD3E heterodimer and one CD247 homodimer forming a stable octameric structure. Upon activation, gamma-delta TR complex associates with FCER1G to initiate intracellular signaling.

It localises to the cell membrane. Constant region of T cell receptor (TR) gamma chain that participates in the antigen recognition. Gamma-delta TRs recognize a variety of self and foreign non-peptide antigens frequently expressed at the epithelial boundaries between the host and external environment, including endogenous lipids presented by MH-like protein CD1D and phosphoantigens presented by butyrophilin-like molecule BTN3A1. Upon antigen recognition induces rapid, innate-like immune responses involved in pathogen clearance and tissue repair. Binding of gamma-delta TR complex to antigen triggers phosphorylation of immunoreceptor tyrosine-based activation motifs (ITAMs) in the CD3 chains by the LCK and FYN kinases, allowing the recruitment, phosphorylation, and activation of ZAP70 that facilitates phosphorylation of the scaffolding proteins LCP2 and LAT. This lead to the formation of a supramolecular signalosome that recruits the phospholipase PLCG1, resulting in calcium mobilization and ERK activation, ultimately leading to T cell expansion and differentiation into effector cells. Gamma-delta TRs are produced through somatic rearrangement of a limited repertoire of variable (V), diversity (D), and joining (J) genes. The potential diversity of gamma-delta TRs is conferred by the unique ability to rearrange (D) genes in tandem and to utilize all three reading frames. The combinatorial diversity is considerably increased by the sequence exonuclease trimming and random nucleotide (N) region additions which occur during the V-(D)-J rearrangements. This is T cell receptor gamma constant 2 from Homo sapiens (Human).